Here is a 415-residue protein sequence, read N- to C-terminus: Glucose-1-phosphate adenylyltransferase (415 aa).

Residues Y100, G165, 182–183 (EK), and S200 contribute to the alpha-D-glucose 1-phosphate site.

The protein belongs to the bacterial/plant glucose-1-phosphate adenylyltransferase family. Homotetramer.

It catalyses the reaction alpha-D-glucose 1-phosphate + ATP + H(+) = ADP-alpha-D-glucose + diphosphate. The protein operates within glycan biosynthesis; glycogen biosynthesis. Its function is as follows. Involved in the biosynthesis of ADP-glucose, a building block required for the elongation reactions to produce glycogen. Catalyzes the reaction between ATP and alpha-D-glucose 1-phosphate (G1P) to produce pyrophosphate and ADP-Glc. This Bifidobacterium animalis subsp. lactis (strain AD011) protein is Glucose-1-phosphate adenylyltransferase.